A 293-amino-acid polypeptide reads, in one-letter code: Bifunctional protein FolD (293 aa).

NADP(+) is bound by residues 165–167, Thr-194, and Val-235; that span reads GRS.

The protein belongs to the tetrahydrofolate dehydrogenase/cyclohydrolase family. Homodimer.

It catalyses the reaction (6R)-5,10-methylene-5,6,7,8-tetrahydrofolate + NADP(+) = (6R)-5,10-methenyltetrahydrofolate + NADPH. The enzyme catalyses (6R)-5,10-methenyltetrahydrofolate + H2O = (6R)-10-formyltetrahydrofolate + H(+). The protein operates within one-carbon metabolism; tetrahydrofolate interconversion. Catalyzes the oxidation of 5,10-methylenetetrahydrofolate to 5,10-methenyltetrahydrofolate and then the hydrolysis of 5,10-methenyltetrahydrofolate to 10-formyltetrahydrofolate. The chain is Bifunctional protein FolD from Syntrophus aciditrophicus (strain SB).